A 216-amino-acid chain; its full sequence is Fibroblast growth factor 17 (216 aa).

Residues 1-22 form the signal peptide; sequence MGAARLLPNLTLCLQLLILCCQ. Asparagine 137 carries an N-linked (GlcNAc...) asparagine glycan. Positions 195–216 are disordered; that stretch reads FEFVGSAPTRRTKRTRRPQSQT. The segment covering 204-216 has biased composition (basic residues); it reads RRTKRTRRPQSQT.

It belongs to the heparin-binding growth factors family. As to quaternary structure, interacts with FGFR3 and FGFR4.

The protein resides in the secreted. Plays an important role in the regulation of embryonic development and as signaling molecule in the induction and patterning of the embryonic brain. Required for normal brain development. The sequence is that of Fibroblast growth factor 17 (Fgf17) from Mus musculus (Mouse).